Reading from the N-terminus, the 771-residue chain is Putative 8-amino-7-oxononanoate synthase 2 (771 aa).

The segment at methionine 1 to isoleucine 418 is unknown. Arginine 407 is a binding site for substrate. Residues valine 419–leucine 771 form a KAPA synthase region. Glycine 485 to tyrosine 486 serves as a coordination point for pyridoxal 5'-phosphate. Histidine 510 serves as a coordination point for substrate. Residues serine 556 and aspartate 581–histidine 584 contribute to the pyridoxal 5'-phosphate site. Lysine 615 carries the N6-(pyridoxal phosphate)lysine modification.

This sequence in the C-terminal section; belongs to the class-II pyridoxal-phosphate-dependent aminotransferase family. BioF subfamily. Requires pyridoxal 5'-phosphate as cofactor.

It carries out the reaction 6-carboxyhexanoyl-[ACP] + L-alanine + H(+) = (8S)-8-amino-7-oxononanoate + holo-[ACP] + CO2. Catalyzes the decarboxylative condensation of pimeloyl-[acyl-carrier protein] and L-alanine to produce 8-amino-7-oxononanoate (AON), [acyl-carrier protein], and carbon dioxide. This is Putative 8-amino-7-oxononanoate synthase 2 (bioF2) from Mycobacterium tuberculosis (strain CDC 1551 / Oshkosh).